The chain runs to 513 residues: GMP synthase [glutamine-hydrolyzing] (513 aa).

The Glutamine amidotransferase type-1 domain occupies Leu5 to Asp195. The active-site Nucleophile is Cys82. Catalysis depends on residues His169 and Glu171. The GMPS ATP-PPase domain occupies Trp196–Arg388. Ser223–Ser229 lines the ATP pocket.

As to quaternary structure, homodimer.

It catalyses the reaction XMP + L-glutamine + ATP + H2O = GMP + L-glutamate + AMP + diphosphate + 2 H(+). Its pathway is purine metabolism; GMP biosynthesis; GMP from XMP (L-Gln route): step 1/1. In terms of biological role, catalyzes the synthesis of GMP from XMP. The sequence is that of GMP synthase [glutamine-hydrolyzing] from Clostridium botulinum (strain Eklund 17B / Type B).